Reading from the N-terminus, the 70-residue chain is uncharacterized protein (70 aa).

Residues 15–37 (LLVSSISESAVALIIITIRILFS) form a helical membrane-spanning segment.

The protein localises to the membrane. This is an uncharacterized protein from Saccharomyces cerevisiae (strain ATCC 204508 / S288c) (Baker's yeast).